The primary structure comprises 394 residues: Penicillopepsin-2 (394 aa).

The N-terminal stretch at Met-1–Ala-20 is a signal peptide. The propeptide at Val-21 to Ala-71 is activation peptide. Residues Tyr-87–Ala-391 form the Peptidase A1 domain. The active site involves Asp-103. Residue Asn-132 is glycosylated (N-linked (GlcNAc...) asparagine). Asp-283 is a catalytic residue. Cys-319 and Cys-354 are oxidised to a cystine.

This sequence belongs to the peptidase A1 family. Monomer.

It localises to the secreted. It catalyses the reaction Hydrolysis of proteins with broad specificity similar to that of pepsin A, preferring hydrophobic residues at P1 and P1', but also cleaving 20-Gly-|-Glu-21 in the B chain of insulin. Clots milk, and activates trypsinogen.. Functionally, secreted aspartic endopeptidase that allows assimilation of proteinaceous substrates. The scissile peptide bond is attacked by a nucleophilic water molecule activated by two aspartic residues in the active site. Shows a broad primary substrate specificity. Favors hydrophobic residues at the P1 and P1' positions, but can also activate trypsinogen and hydrolyze the B chain of insulin between positions 'Gly-20' and 'Glu-21'. This chain is Penicillopepsin-2, found in Penicillium janthinellum (Penicillium vitale).